A 1079-amino-acid polypeptide reads, in one-letter code: Tudor domain-containing protein 7A (1079 aa).

The HTH OST-type 1 domain occupies 3 to 76 (DVELVKKMLR…TGEVMCFAGV (74 aa)). The segment at 153-175 (LPSSRAPAWQMNRKSPVPEKTSV) is disordered. 2 consecutive HTH OST-type domains span residues 205–270 (DVEL…RLVY) and 366–434 (LTTE…ILYT). Tudor domains follow at residues 519–576 (SPKI…FMTL) and 708–765 (RPFC…FLKE).

It belongs to the TDRD7 family.

The protein localises to the cytoplasm. Component of specific cytoplasmic RNA granules involved in post-transcriptional regulation of specific genes: probably acts by binding to specific mRNAs and regulating their translation. Probably required during spermatogenesis. Required for structural integrity of granules in primordial germ cells (PGCs). This is Tudor domain-containing protein 7A (tdrd7a) from Danio rerio (Zebrafish).